The following is a 168-amino-acid chain: Protein-export protein SecB (168 aa).

This sequence belongs to the SecB family. In terms of assembly, homotetramer, a dimer of dimers. One homotetramer interacts with 1 SecA dimer.

Its subcellular location is the cytoplasm. Functionally, one of the proteins required for the normal export of preproteins out of the cell cytoplasm. It is a molecular chaperone that binds to a subset of precursor proteins, maintaining them in a translocation-competent state. It also specifically binds to its receptor SecA. This chain is Protein-export protein SecB, found in Sinorhizobium medicae (strain WSM419) (Ensifer medicae).